Consider the following 182-residue polypeptide: Adenine phosphoribosyltransferase (182 aa).

Belongs to the purine/pyrimidine phosphoribosyltransferase family. As to quaternary structure, homodimer.

The protein resides in the cytoplasm. It carries out the reaction AMP + diphosphate = 5-phospho-alpha-D-ribose 1-diphosphate + adenine. It participates in purine metabolism; AMP biosynthesis via salvage pathway; AMP from adenine: step 1/1. Functionally, catalyzes a salvage reaction resulting in the formation of AMP, that is energically less costly than de novo synthesis. This chain is Adenine phosphoribosyltransferase, found in Campylobacter jejuni subsp. jejuni serotype O:2 (strain ATCC 700819 / NCTC 11168).